The primary structure comprises 426 residues: DNA polymerase processivity factor component OPG148 (426 aa).

This sequence belongs to the orthopoxvirus OPG148 family. In terms of assembly, interacts with the DNA polymerase catalytic subunit OPG071. Interacts with UDG/OPG116. Component of the uracil-DNA glycosylase(UDG)-OPG148-polymerase complex; OPG148 and UDG form a heterodimeric processivity factor that associates with OPG071 to form the processive polymerase holoenzyme. Interacts with OPG117.

Its function is as follows. Plays an essential role in viral DNA replication by acting as the polymerase processivity factor together with protein OPG116. Serves as a bridge which links the DNA polymerase OPG071 and the uracil DNA glycosylase. The chain is DNA polymerase processivity factor component OPG148 (OPG148) from Variola virus (isolate Human/India/Ind3/1967) (VARV).